We begin with the raw amino-acid sequence, 439 residues long: NAD-dependent malic enzyme 1 (439 aa).

In terms of domain architecture, ACT spans 9–84 (TLMIETPSVP…GIRLHTVSDE (76 aa)). The active-site Proton donor is the Y112. K167 serves as the catalytic Proton acceptor. A divalent metal cation is bound by residues E209, D210, and D235. NAD(+) is bound by residues 268–271 (LGAA), N347, and N373.

Belongs to the malic enzymes family. Requires Mg(2+) as cofactor. The cofactor is Mn(2+).

It carries out the reaction (S)-malate + NAD(+) = pyruvate + CO2 + NADH. The catalysed reaction is oxaloacetate + H(+) = pyruvate + CO2. Functionally, catalyzes the decarboxylation of malate to pyruvate. Is specific for NAD, cannot use NADP. Can also catalyze the decarboxylation of oxaloacetate. Involved in keeping the ATP levels high. This chain is NAD-dependent malic enzyme 1, found in Bacillus subtilis (strain 168).